We begin with the raw amino-acid sequence, 271 residues long: L-aspartate dehydrogenase (271 aa).

Residues Ala-124 and Asn-192 each coordinate NAD(+). His-222 is an active-site residue.

It belongs to the L-aspartate dehydrogenase family.

The catalysed reaction is L-aspartate + NADP(+) + H2O = oxaloacetate + NH4(+) + NADPH + H(+). It catalyses the reaction L-aspartate + NAD(+) + H2O = oxaloacetate + NH4(+) + NADH + H(+). Its pathway is cofactor biosynthesis; NAD(+) biosynthesis; iminoaspartate from L-aspartate (dehydrogenase route): step 1/1. Specifically catalyzes the NAD or NADP-dependent dehydrogenation of L-aspartate to iminoaspartate. The protein is L-aspartate dehydrogenase of Methanosarcina barkeri (strain Fusaro / DSM 804).